We begin with the raw amino-acid sequence, 1039 residues long: MAPAAIPLPSEETTPPVIKIKAGSIRHECSVSMRFLKGSTLPLPCACRVDCPIGLHRTLLSNTMGPMNARAALALAMVFTFQRLCAEERFVISTEYFDIIYTEASTESARILAKHADRYEEQISLMLNRVPDKKKRTTVVLYAHTQDAGGSFSSKPSRKIIINDTRVPNLGLGSFKDSLLSIFYHELTHKISLDFFMPLLPPLFTEGVAVAFESNDGTQGRLHDPLTMHYLIQNKLENVSPSWREVAELRYNYPHGMPYVYGGKFTEYLQKIYGKERCARLWQNSWRLFIRHRFWDVFQKNLGTAWNEFIDSIPIPEKVAQPQLLSEREAQGHYGARSAAPTGFAYYDRDRHAVRFRDKAGGVRTLFSHDNTLHHLNFSEDGRYLAVSDTIDTWSERTHRVRVFDTHSGSFSPEVYTGASEACFVGNGQKIVFVRVQGQYSRLTLKDRTDPTFEKVLYEAGPGLPFGALYAPAYAGDGTVAIIGARGMERNLLFIPVDDRPMMQVPREQMPHAMRELQSQKIKGSWTLTFSWANMNMLSRLGFYDVSRHTFRLMDQDVSGGVFAPVVYEALPAAVHEESAAEATIRGEEPVVRVAYTGRHRMHMSQYQRDDRALRERRVSLVPLHPAEAEEQSRPATLMVNGEFIADVHEADRGRRYRAAQWMWPPTFSPRFVPPNSFSSLKDLGHTGLGVNMKFADPFGLVEVNLQSVSHFYPFFTSLGLKSSFYVGKTTYALRAYHEIDTGGFRYTKLGGAFETLTNFPMQDDRNAFFVRTAVGVDSYSCLCANGGGNGNCCGNNGGQQCCACNGQGANGPHYYKSLESPFIQAQVEMGYSFSQRAERTGTNWFVADVTGVSLKLHVANSFDTGKTKDAVLVQTKGSFRLPVVPLRVGVSAYVGYNAGWRGGKGNILAEHPVYGFPGPTYLPKLAGVGGMEGSCKKSKSAGFGAEAVLTILDYDISIYDPYLPVFYRNIVWNVSCEYVLNAPDFSSPKHLCVASTSLVLEFDLADVKVRAGVQYGFQLAETQSATTPGFSPIFSMAV.

This is an uncharacterized protein from Treponema pallidum (strain Nichols).